We begin with the raw amino-acid sequence, 356 residues long: Histidinol-phosphate aminotransferase (356 aa).

Lys208 carries the N6-(pyridoxal phosphate)lysine modification.

It belongs to the class-II pyridoxal-phosphate-dependent aminotransferase family. Histidinol-phosphate aminotransferase subfamily. In terms of assembly, homodimer. Requires pyridoxal 5'-phosphate as cofactor.

It carries out the reaction L-histidinol phosphate + 2-oxoglutarate = 3-(imidazol-4-yl)-2-oxopropyl phosphate + L-glutamate. It functions in the pathway amino-acid biosynthesis; L-histidine biosynthesis; L-histidine from 5-phospho-alpha-D-ribose 1-diphosphate: step 7/9. The sequence is that of Histidinol-phosphate aminotransferase from Lactococcus lactis subsp. cremoris (strain MG1363).